Consider the following 161-residue polypeptide: Anaerobic nitrite reductase Hb2 (161 aa).

The region spanning 8–157 is the Globin domain; the sequence is GFSEEQEALV…LVDAIKSEMK (150 aa). The short motif at 41 to 45 is the Homodimerization element; sequence EIAPS. Heme b-binding residues include serine 51, lysine 65, histidine 69, lysine 99, threonine 103, and histidine 104. The short motif at 111 to 123 is the Homodimerization element; sequence NEHFEVTKFALLE.

Belongs to the plant globin family. Homodimer. Heme b is required as a cofactor. Predominantly expressed in roots, cotyledons, stems and nodules (confined to some cells associated with the nitrogen-fixing Bradyrhizobium symbiont), and, to a lower extent, in flowers, young leaves, pods and seeds.

The protein localises to the cytoplasm. It localises to the nucleus. It catalyses the reaction Fe(III)-heme b-[protein] + nitric oxide + H2O = Fe(II)-heme b-[protein] + nitrite + 2 H(+). Phytoglobin that reduces nitrite to nitric oxide (NO) under anoxic conditions (e.g. during flooding or in waterlogged soil) and upon root nodulation. Required for general plant development and during nodulation, especially for the onset of symbiosis. Monitors nitric oxide (NO) levels during early phase of the nitrogen-fixing symbiosis and buffers oxygen in functioning nodules. May not function as an oxygen storage or transport protein. Has an unusually high affinity for O(2) through a hexacoordinate heme iron because of a very low dissociation constant. Involved in water stress tolerance. The polypeptide is Anaerobic nitrite reductase Hb2 (Glycine max (Soybean)).